Consider the following 967-residue polypeptide: Leucine-rich repeat receptor-like protein kinase PXC2 (967 aa).

An N-terminal signal peptide occupies residues Met-1 to Ala-20. The Extracellular portion of the chain corresponds to Asp-21–Ser-609. 11 LRR repeats span residues Leu-91–His-114, Leu-115–Gln-139, Gly-141–Cys-164, Ser-165–Lys-189, Leu-191–Leu-212, Asp-214–Cys-236, Ser-237–Leu-260, Ser-262–Ile-284, Ala-285–Asn-307, Leu-308–Cys-332, and Asn-334–Gly-356. Asn-103 and Asn-127 each carry an N-linked (GlcNAc...) asparagine glycan. Asn-171 is a glycosylation site (N-linked (GlcNAc...) asparagine). Asn-219 is a glycosylation site (N-linked (GlcNAc...) asparagine). N-linked (GlcNAc...) asparagine glycans are attached at residues Asn-296, Asn-315, and Asn-331. Asn-374 is a glycosylation site (N-linked (GlcNAc...) asparagine). LRR repeat units follow at residues Leu-384–Leu-408, Ser-410–Leu-432, Lys-433–Ala-456, Val-457–Cys-480, Ala-482–Ser-503, Leu-504–Leu-528, and His-530–Asn-552. 9 N-linked (GlcNAc...) asparagine glycosylation sites follow: Asn-415, Asn-446, Asn-479, Asn-487, Asn-516, Asn-535, Asn-540, Asn-571, and Asn-587. Residues Ala-610–Leu-630 form a helical membrane-spanning segment. Over Asn-631 to Glu-967 the chain is Cytoplasmic. The 273-residue stretch at Leu-687 to Ile-959 folds into the Protein kinase domain. Residues Leu-693–Val-701 and Lys-715 contribute to the ATP site.

It belongs to the protein kinase superfamily. Ser/Thr protein kinase family. In terms of tissue distribution, expressed in the vascular strands of cotyledons, the shoot apex, hypocotyls, roots, leaves, stems and flowers.

The protein localises to the cell membrane. Its function is as follows. Leucine-rich repeat receptor-like protein kinase that may play a role in vascular tissues development. This is Leucine-rich repeat receptor-like protein kinase PXC2 from Arabidopsis thaliana (Mouse-ear cress).